Here is a 243-residue protein sequence, read N- to C-terminus: 1-(5-phosphoribosyl)-5-[(5-phosphoribosylamino)methylideneamino] imidazole-4-carboxamide isomerase (243 aa).

Catalysis depends on aspartate 10, which acts as the Proton acceptor. The Proton donor role is filled by aspartate 131.

It belongs to the HisA/HisF family.

Its subcellular location is the cytoplasm. It carries out the reaction 1-(5-phospho-beta-D-ribosyl)-5-[(5-phospho-beta-D-ribosylamino)methylideneamino]imidazole-4-carboxamide = 5-[(5-phospho-1-deoxy-D-ribulos-1-ylimino)methylamino]-1-(5-phospho-beta-D-ribosyl)imidazole-4-carboxamide. The protein operates within amino-acid biosynthesis; L-histidine biosynthesis; L-histidine from 5-phospho-alpha-D-ribose 1-diphosphate: step 4/9. The chain is 1-(5-phosphoribosyl)-5-[(5-phosphoribosylamino)methylideneamino] imidazole-4-carboxamide isomerase from Rhizorhabdus wittichii (strain DSM 6014 / CCUG 31198 / JCM 15750 / NBRC 105917 / EY 4224 / RW1) (Sphingomonas wittichii).